Here is a 394-residue protein sequence, read N- to C-terminus: 1-deoxy-D-xylulose 5-phosphate reductoisomerase (394 aa).

Residues Thr-14, Gly-15, Ser-16, Ile-17, Gly-40, Asn-43, and Asn-130 each contribute to the NADPH site. Lys-131 serves as a coordination point for 1-deoxy-D-xylulose 5-phosphate. Glu-132 lines the NADPH pocket. Asp-154 lines the Mn(2+) pocket. Ser-155, Glu-156, Ser-180, and His-203 together coordinate 1-deoxy-D-xylulose 5-phosphate. Glu-156 provides a ligand contact to Mn(2+). Gly-209 lines the NADPH pocket. 1-deoxy-D-xylulose 5-phosphate is bound by residues Ser-216, Asn-221, Lys-222, and Glu-225. Glu-225 is a Mn(2+) binding site.

Belongs to the DXR family. Mg(2+) serves as cofactor. The cofactor is Mn(2+).

The catalysed reaction is 2-C-methyl-D-erythritol 4-phosphate + NADP(+) = 1-deoxy-D-xylulose 5-phosphate + NADPH + H(+). It participates in isoprenoid biosynthesis; isopentenyl diphosphate biosynthesis via DXP pathway; isopentenyl diphosphate from 1-deoxy-D-xylulose 5-phosphate: step 1/6. Functionally, catalyzes the NADPH-dependent rearrangement and reduction of 1-deoxy-D-xylulose-5-phosphate (DXP) to 2-C-methyl-D-erythritol 4-phosphate (MEP). The protein is 1-deoxy-D-xylulose 5-phosphate reductoisomerase of Corynebacterium efficiens (strain DSM 44549 / YS-314 / AJ 12310 / JCM 11189 / NBRC 100395).